The chain runs to 356 residues: Caspase activity and apoptosis inhibitor 1 (356 aa).

A compositionally biased stretch (basic residues) spans 1 to 14; the sequence is MTGKKSSREKRRKR. 2 disordered regions span residues 1–24 and 54–80; these read MTGK…ASLA and VAGG…GSLQ. Residue S68 is modified to Phosphoserine. Phosphothreonine is present on T69. Residue K84 forms a Glycyl lysine isopeptide (Lys-Gly) (interchain with G-Cter in SUMO2) linkage. Phosphoserine is present on residues S100 and S183. The segment at 208–234 is disordered; that stretch reads DSTSSLRENKQPEVLESKQGKGEDSDV. The span at 214–231 shows a compositional bias: basic and acidic residues; that stretch reads RENKQPEVLESKQGKGED. Residues 276–306 adopt a coiled-coil conformation; the sequence is ENTVQSEAGQIDDLERDIEKSVNEILGLAES. S307 is modified (phosphoserine).

In terms of biological role, anti-apoptotic protein that modulates a caspase-10 dependent mitochondrial caspase-3/9 feedback amplification loop. In Mus musculus (Mouse), this protein is Caspase activity and apoptosis inhibitor 1 (Caap1).